Consider the following 475-residue polypeptide: Bifunctional protein HldE (475 aa).

The tract at residues 1-321 (MADKIDISLY…RALHQITASH (321 aa)) is ribokinase. ATP is bound at residue 197–200 (NLKE). Asp266 is a catalytic residue. The cytidylyltransferase stretch occupies residues 346–475 (MTNGCFDILH…TSRLVEKMLN (130 aa)).

It in the N-terminal section; belongs to the carbohydrate kinase PfkB family. In the C-terminal section; belongs to the cytidylyltransferase family. As to quaternary structure, homodimer.

It carries out the reaction D-glycero-beta-D-manno-heptose 7-phosphate + ATP = D-glycero-beta-D-manno-heptose 1,7-bisphosphate + ADP + H(+). The catalysed reaction is D-glycero-beta-D-manno-heptose 1-phosphate + ATP + H(+) = ADP-D-glycero-beta-D-manno-heptose + diphosphate. The protein operates within nucleotide-sugar biosynthesis; ADP-L-glycero-beta-D-manno-heptose biosynthesis; ADP-L-glycero-beta-D-manno-heptose from D-glycero-beta-D-manno-heptose 7-phosphate: step 1/4. It functions in the pathway nucleotide-sugar biosynthesis; ADP-L-glycero-beta-D-manno-heptose biosynthesis; ADP-L-glycero-beta-D-manno-heptose from D-glycero-beta-D-manno-heptose 7-phosphate: step 3/4. Its function is as follows. Catalyzes the phosphorylation of D-glycero-D-manno-heptose 7-phosphate at the C-1 position to selectively form D-glycero-beta-D-manno-heptose-1,7-bisphosphate. Functionally, catalyzes the ADP transfer from ATP to D-glycero-beta-D-manno-heptose 1-phosphate, yielding ADP-D-glycero-beta-D-manno-heptose. The chain is Bifunctional protein HldE from Coxiella burnetii (strain Dugway 5J108-111).